The chain runs to 348 residues: 3-isopropylmalate dehydrogenase (348 aa).

76-87 (GPKWTDPNNRPE) contributes to the NAD(+) binding site. Residues Arg94, Arg104, Arg132, and Asp217 each contribute to the substrate site. Mg(2+) contacts are provided by Asp217, Asp241, and Asp245. NAD(+) is bound at residue 275-287 (GSAPDIAGKNVAN).

Belongs to the isocitrate and isopropylmalate dehydrogenases family. LeuB type 1 subfamily. As to quaternary structure, homodimer. It depends on Mg(2+) as a cofactor. Requires Mn(2+) as cofactor.

Its subcellular location is the cytoplasm. It carries out the reaction (2R,3S)-3-isopropylmalate + NAD(+) = 4-methyl-2-oxopentanoate + CO2 + NADH. It functions in the pathway amino-acid biosynthesis; L-leucine biosynthesis; L-leucine from 3-methyl-2-oxobutanoate: step 3/4. Catalyzes the oxidation of 3-carboxy-2-hydroxy-4-methylpentanoate (3-isopropylmalate) to 3-carboxy-4-methyl-2-oxopentanoate. The product decarboxylates to 4-methyl-2 oxopentanoate. This chain is 3-isopropylmalate dehydrogenase, found in Staphylococcus aureus (strain Mu50 / ATCC 700699).